Here is a 175-residue protein sequence, read N- to C-terminus: Bacterial proteasome activator (175 aa).

The segment at 152-175 (LPPGIQVPGAQRGGATHPGTGQYL) is disordered. The HbYX motif signature appears at 173–175 (QYL).

The protein belongs to the Bpa family. As to quaternary structure, forms a homooligomeric, either hexameric or heptameric, ring-like structure which stacks co-axially with the proteasomal alpha-rings.

Functionally, interacts with the core proteasome alpha-subunit (PrcA) through its C-terminal hydrophobic-tyrosine-X motif (HbYX motif). Interaction of Bpa with the proteasome stimulates proteasomal peptidase and casein degradation activity, which suggests Bpa could play a role in the removal of non-native or damaged proteins by influencing the conformation of the proteasome complex upon interaction. This chain is Bacterial proteasome activator, found in Mycolicibacterium smegmatis (strain ATCC 700084 / mc(2)155) (Mycobacterium smegmatis).